The sequence spans 422 residues: UDP-N-acetylglucosamine 1-carboxyvinyltransferase (422 aa).

Residue 22–23 participates in phosphoenolpyruvate binding; it reads KN. Arg-92 contacts UDP-N-acetyl-alpha-D-glucosamine. The active-site Proton donor is the Cys-116. Cys-116 is modified (2-(S-cysteinyl)pyruvic acid O-phosphothioketal). UDP-N-acetyl-alpha-D-glucosamine-binding positions include 121 to 125, Asp-307, and Leu-329; that span reads RPVDL.

Belongs to the EPSP synthase family. MurA subfamily.

The protein resides in the cytoplasm. It carries out the reaction phosphoenolpyruvate + UDP-N-acetyl-alpha-D-glucosamine = UDP-N-acetyl-3-O-(1-carboxyvinyl)-alpha-D-glucosamine + phosphate. Its pathway is cell wall biogenesis; peptidoglycan biosynthesis. In terms of biological role, cell wall formation. Adds enolpyruvyl to UDP-N-acetylglucosamine. This Aliarcobacter butzleri (strain RM4018) (Arcobacter butzleri) protein is UDP-N-acetylglucosamine 1-carboxyvinyltransferase.